Here is a 231-residue protein sequence, read N- to C-terminus: MQLIKNNEYEYADIILSSFVNLGDSELKKIKNVQKLLTQVDIGHYYLNKLPAFDAYLQYNELYENKRITSGVYMCAVATVMGYKDLYLTGIDFYQEKGNPYAFHHQKENIIKLLPSFSQNKSQSDIHSMEYDLNALYFLQKHYGVNIYCISPESPLCNYFPLSPLNNPITFILEEKKNYTQDILIPPKFVYKKIGIYSKPRIYQNLIFRLIWDILRLPNDIKHALKSRKWD.

This is an uncharacterized protein from Haemophilus influenzae (strain ATCC 51907 / DSM 11121 / KW20 / Rd).